Here is a 456-residue protein sequence, read N- to C-terminus: Bifunctional protein GlmU (456 aa).

Residues 1-229 form a pyrophosphorylase region; that stretch reads MLNSAMSVVI…ISETDGVNNR (229 aa). Residues 11-14, K25, Q76, 81-82, 103-105, G140, E154, N169, and N227 contribute to the UDP-N-acetyl-alpha-D-glucosamine site; these read LAAG, GT, and YGD. Residue D105 participates in Mg(2+) binding. N227 is a binding site for Mg(2+). A linker region spans residues 230-250; that stretch reads LQLSRLERIYQAEQAEKLLLS. The tract at residues 251 to 456 is N-acetyltransferase; the sequence is GVMLRDPARF…QGWQRPVKKK (206 aa). 2 residues coordinate UDP-N-acetyl-alpha-D-glucosamine: R333 and K351. H363 serves as the catalytic Proton acceptor. UDP-N-acetyl-alpha-D-glucosamine contacts are provided by Y366 and N377. Acetyl-CoA-binding positions include A380, 386-387, S405, A423, and R440; that span reads NY.

The protein in the N-terminal section; belongs to the N-acetylglucosamine-1-phosphate uridyltransferase family. In the C-terminal section; belongs to the transferase hexapeptide repeat family. In terms of assembly, homotrimer. Mg(2+) is required as a cofactor.

It localises to the cytoplasm. It catalyses the reaction alpha-D-glucosamine 1-phosphate + acetyl-CoA = N-acetyl-alpha-D-glucosamine 1-phosphate + CoA + H(+). The enzyme catalyses N-acetyl-alpha-D-glucosamine 1-phosphate + UTP + H(+) = UDP-N-acetyl-alpha-D-glucosamine + diphosphate. Its pathway is nucleotide-sugar biosynthesis; UDP-N-acetyl-alpha-D-glucosamine biosynthesis; N-acetyl-alpha-D-glucosamine 1-phosphate from alpha-D-glucosamine 6-phosphate (route II): step 2/2. The protein operates within nucleotide-sugar biosynthesis; UDP-N-acetyl-alpha-D-glucosamine biosynthesis; UDP-N-acetyl-alpha-D-glucosamine from N-acetyl-alpha-D-glucosamine 1-phosphate: step 1/1. It participates in bacterial outer membrane biogenesis; LPS lipid A biosynthesis. In terms of biological role, catalyzes the last two sequential reactions in the de novo biosynthetic pathway for UDP-N-acetylglucosamine (UDP-GlcNAc). The C-terminal domain catalyzes the transfer of acetyl group from acetyl coenzyme A to glucosamine-1-phosphate (GlcN-1-P) to produce N-acetylglucosamine-1-phosphate (GlcNAc-1-P), which is converted into UDP-GlcNAc by the transfer of uridine 5-monophosphate (from uridine 5-triphosphate), a reaction catalyzed by the N-terminal domain. The polypeptide is Bifunctional protein GlmU (Salmonella gallinarum (strain 287/91 / NCTC 13346)).